Here is a 503-residue protein sequence, read N- to C-terminus: SusD-like protein P38 (503 aa).

An N-terminal signal peptide occupies residues 1-21 (MKKFKNISITFLILISLGVLN).

Belongs to the SusD family.

The protein resides in the cell outer membrane. Its function is as follows. Polysaccharide-binding protein probably involved in ulvan degradation. Ulvan is the main polysaccharide component of the Ulvales (green seaweed) cell wall. It is composed of disaccharide building blocks comprising 3-sulfated rhamnose (Rha3S) linked to D-glucuronic acid (GlcA), L-iduronic acid (IduA), or D-xylose (Xyl). The SusD-like protein may mediate ulvan oligomer-binding before transport in the periplasm for further degradation. This chain is SusD-like protein P38, found in Formosa agariphila (strain DSM 15362 / KCTC 12365 / LMG 23005 / KMM 3901 / M-2Alg 35-1).